Here is a 951-residue protein sequence, read N- to C-terminus: Leucine-rich repeat-containing G-protein coupled receptor 4 (951 aa).

Positions 1–19 (MPGPLGLLCFLALGLRGSA) are cleaved as a signal peptide. Topologically, residues 20–544 (EPSGAAPPLC…LLGSWMIRLT (525 aa)) are extracellular. The LRRNT domain maps to 25 to 57 (APPLCAAPCSCDGDRRVDCSGKGLTAVPEGLSA). 2 disulfides stabilise this stretch: C29–C35 and C33–C43. 11 LRR repeats span residues 35–58 (CDGD…LSAF), 59–79 (TQLL…AFKN), 81–103 (PFLE…ALSG), 104–127 (LKEL…AIRG), 128–151 (LSSL…SFEG), 153–175 (TQLR…PLSN), 176–199 (LPTL…AFTN), 201–223 (SSLV…CFDG), 224–247 (LDNL…IKAL), 248–270 (PSLK…AFDG), and 272–294 (PLLK…AFHN). A glycan (N-linked (GlcNAc...) asparagine) is linked at N68. N199 is a glycosylation site (N-linked (GlcNAc...) asparagine). Residues N294 and N314 are each glycosylated (N-linked (GlcNAc...) asparagine). LRR repeat units lie at residues 318-341 (TVRL…LCQE), 342-363 (QKRL…SFNG), 364-387 (CHAL…TFQG), 388-411 (LTSL…AFAK), and 413-435 (GSIT…GLNG). C339 and C364 are joined by a disulfide. 2 disulfides stabilise this stretch: C470-C522 and C471-C476. Residues 545-565 (VWFIFLVALFFNLLVILTTFA) traverse the membrane as a helical segment. Residues 566-575 (SCTSVPSSKL) lie on the Cytoplasmic side of the membrane. The helical transmembrane segment at 576–596 (FIGLISVSNLFMGAYTGILTF) threads the bilayer. The Extracellular segment spans residues 597 to 619 (LDAVSWGRFAEFGIWWEIGSGCK). C618 and C693 are joined by a disulfide. A helical membrane pass occupies residues 620 to 640 (IAGFLAVFSSESAIFLLMLAA). The Cytoplasmic segment spans residues 641-661 (VERSLSAKDMMKNGKSNHLRQ). The chain crosses the membrane as a helical span at residues 662–682 (FRIAALLAFLGAAVAGSFPLF). Over 683–703 (HRGEYSASPLCLPFPTGETPS) the chain is Extracellular. The chain crosses the membrane as a helical span at residues 704–724 (LGFTVTLVLLNSLAFLLMAII). Residues 725 to 756 (YTKLYCNLEKEDLSESSQSSMIKHVAWLIFTN) lie on the Cytoplasmic side of the membrane. The chain crosses the membrane as a helical span at residues 757–777 (CIFFCPVAFFSFAPLITAVSI). Residues 778 to 783 (SPEIMK) are Extracellular-facing. A helical membrane pass occupies residues 784–804 (SVTLIFFPLPACLNPVLYVFF). At 805 to 951 (NPKFKEDWKL…YAYNLPRVKD (147 aa)) the chain is on the cytoplasmic side. The residue at position 920 (S920) is a Phosphoserine.

Belongs to the G-protein coupled receptor 1 family.

It is found in the cell membrane. Its function is as follows. Receptor for R-spondins that potentiates the canonical Wnt signaling pathway and is involved in the formation of various organs. Upon binding to R-spondins (RSPO1, RSPO2, RSPO3 or RSPO4), associates with phosphorylated LRP6 and frizzled receptors that are activated by extracellular Wnt receptors, triggering the canonical Wnt signaling pathway to increase expression of target genes. In contrast to classical G-protein coupled receptors, does not activate heterotrimeric G-proteins to transduce the signal. Its function as activator of the Wnt signaling pathway is required for the development of various organs, including liver, kidney, intestine, bone, reproductive tract and eye. May also act as a receptor for norrin (NDP), such results however required additional confirmation in vivo. Required during spermatogenesis to activate the Wnt signaling pathway in peritubular myoid cells. Required for the maintenance of intestinal stem cells and Paneth cell differentiation in postnatal intestinal crypts. Acts as a regulator of bone formation and remodeling. Involved in kidney development; required for maintaining the ureteric bud in an undifferentiated state. Involved in the development of the anterior segment of the eye. Required during erythropoiesis. Also acts as a negative regulator of innate immunity by inhibiting TLR2/TLR4 associated pattern-recognition and pro-inflammatory cytokine production. Plays an important role in regulating the circadian rhythms of plasma lipids, partially through regulating the rhythmic expression of MTTP. Required for proper development of GnRH neurons (gonadotropin-releasing hormone expressing neurons) that control the release of reproductive hormones from the pituitary gland. This chain is Leucine-rich repeat-containing G-protein coupled receptor 4 (LGR4), found in Bos taurus (Bovine).